The primary structure comprises 606 residues: Endonuclease 8-like 3 (606 aa).

V2 acts as the Schiff-base intermediate with DNA; via amino nitrogen in catalysis. Positions 193 and 272 each coordinate DNA. The segment at 248–282 adopts an FPG-type zinc-finger fold; the sequence is KVYKRPNCDQCHSKITVCRFGENSRMTYFCPHCQK. Residues 318–347 form a RanBP2-type zinc finger; sequence SEEQWSCVVCTLINRPSAKACDACLTTRPL. Phosphoserine is present on S451. Over residues 479-494 the composition is skewed to polar residues; sequence KSYNSGLSNSELQTNR. The interval 479-506 is disordered; it reads KSYNSGLSNSELQTNRTRGHHSKSDGSP. 8 residues coordinate Zn(2+): C508, H511, C534, C542, C555, H557, C580, and C588. GRF-type zinc fingers lie at residues 508 to 551 and 555 to 597; these read CKMH…ADLS and CRHG…AENG.

Belongs to the FPG family. In terms of tissue distribution, expressed in testis, thymus, spleen and bone marrow. In young mice, expressed at higher levels in thymocytes than splenocytes. At 12 dpc, abundant in the subventricular zone (SVZ) of the lateral ventricles. At 17.5 dpc and P0, expression is limited to distinct cells in the cortical SVZ, in cells of the secondary matrix, the dentate gyrus migratory route and the dentate gyrus.

It is found in the nucleus. It localises to the chromosome. The enzyme catalyses 2'-deoxyribonucleotide-(2'-deoxyribose 5'-phosphate)-2'-deoxyribonucleotide-DNA = a 3'-end 2'-deoxyribonucleotide-(2,3-dehydro-2,3-deoxyribose 5'-phosphate)-DNA + a 5'-end 5'-phospho-2'-deoxyribonucleoside-DNA + H(+). Its function is as follows. DNA glycosylase which prefers single-stranded DNA (ssDNA), or partially ssDNA structures such as bubble and fork structures, to double-stranded DNA (dsDNA). Mediates interstrand cross-link repair in response to replication stress: acts by mediating DNA glycosylase activity, cleaving one of the two N-glycosyl bonds comprising the interstrand cross-link, which avoids the formation of a double-strand break but generates an abasic site that is bypassed by translesion synthesis polymerases. In vitro, displays strong glycosylase activity towards the hydantoin lesions spiroiminodihydantoin (Sp) and guanidinohydantoin (Gh) in both ssDNA and dsDNA; also recognizes FapyA, FapyG, 5-OHU, 5-OHC, 5-OHMH, Tg and 8-oxoA lesions in ssDNA. No activity on 8-oxoG detected. Also shows weak DNA-(apurinic or apyrimidinic site) lyase activity. In vivo, appears to be the primary enzyme involved in removing Sp and Gh from ssDNA in neonatal tissues. The protein is Endonuclease 8-like 3 (Neil3) of Mus musculus (Mouse).